The following is a 361-amino-acid chain: Tyrosine--tRNA ligase (361 aa).

Y36, Y162, Q166, D169, and Q184 together coordinate L-tyrosine. The 'KMSKS' region motif lies at K235–S239. ATP is bound at residue K238.

Belongs to the class-I aminoacyl-tRNA synthetase family. TyrS type 4 subfamily. Homodimer.

It is found in the cytoplasm. The enzyme catalyses tRNA(Tyr) + L-tyrosine + ATP = L-tyrosyl-tRNA(Tyr) + AMP + diphosphate + H(+). Catalyzes the attachment of tyrosine to tRNA(Tyr) in a two-step reaction: tyrosine is first activated by ATP to form Tyr-AMP and then transferred to the acceptor end of tRNA(Tyr). The sequence is that of Tyrosine--tRNA ligase from Sulfolobus acidocaldarius (strain ATCC 33909 / DSM 639 / JCM 8929 / NBRC 15157 / NCIMB 11770).